Reading from the N-terminus, the 155-residue chain is Ribosomal RNA large subunit methyltransferase H (155 aa).

Residues L72, G103, and 122–127 (LSPLTL) contribute to the S-adenosyl-L-methionine site.

Belongs to the RNA methyltransferase RlmH family. As to quaternary structure, homodimer.

Its subcellular location is the cytoplasm. The catalysed reaction is pseudouridine(1915) in 23S rRNA + S-adenosyl-L-methionine = N(3)-methylpseudouridine(1915) in 23S rRNA + S-adenosyl-L-homocysteine + H(+). Functionally, specifically methylates the pseudouridine at position 1915 (m3Psi1915) in 23S rRNA. The protein is Ribosomal RNA large subunit methyltransferase H of Histophilus somni (strain 2336) (Haemophilus somnus).